A 216-amino-acid polypeptide reads, in one-letter code: Nicotinamidase (216 aa).

Asp-8 is a catalytic residue. Asp-51, His-53, and His-94 together coordinate Zn(2+). Residue Lys-122 is part of the active site. Cys-167 serves as the catalytic Nucleophile.

The protein belongs to the isochorismatase family.

Its subcellular location is the cytoplasm. The protein resides in the nucleus. It is found in the peroxisome. The enzyme catalyses nicotinamide + H2O = nicotinate + NH4(+). Its pathway is cofactor biosynthesis; nicotinate biosynthesis; nicotinate from nicotinamide: step 1/1. With respect to regulation, inhibited by N-ethylmaleimide, HgCl(2) and PCMB. Competitively inhibited by NAD, NMN and 3-acetylpyridine. In terms of biological role, catalyzes the deamidation of nicotinamide, an early step in the NAD(+) salvage pathway. Positively regulates SIR2-mediated silencing and longevity by preventing the accumulation of intracellular nicotinamide, an inhibitor of SIR2, during times of stress. Also acts on nicotinyl hydroxamate. The chain is Nicotinamidase (PNC1) from Saccharomyces cerevisiae (strain ATCC 204508 / S288c) (Baker's yeast).